The following is a 640-amino-acid chain: 1,4-alpha-glucan branching enzyme GlgB (640 aa).

Catalysis depends on Asp-318, which acts as the Nucleophile. Catalysis depends on Glu-371, which acts as the Proton donor.

This sequence belongs to the glycosyl hydrolase 13 family. GlgB subfamily. Monomer.

It catalyses the reaction Transfers a segment of a (1-&gt;4)-alpha-D-glucan chain to a primary hydroxy group in a similar glucan chain.. The protein operates within glycan biosynthesis; glycogen biosynthesis. In terms of biological role, catalyzes the formation of the alpha-1,6-glucosidic linkages in glycogen by scission of a 1,4-alpha-linked oligosaccharide from growing alpha-1,4-glucan chains and the subsequent attachment of the oligosaccharide to the alpha-1,6 position. The chain is 1,4-alpha-glucan branching enzyme GlgB from Francisella tularensis subsp. mediasiatica (strain FSC147).